The following is a 367-amino-acid chain: DNA replication and repair protein RecF (367 aa).

Residue 30-37 participates in ATP binding; the sequence is GDNAQGKT.

The protein belongs to the RecF family.

It is found in the cytoplasm. The RecF protein is involved in DNA metabolism; it is required for DNA replication and normal SOS inducibility. RecF binds preferentially to single-stranded, linear DNA. It also seems to bind ATP. In Clostridium beijerinckii (strain ATCC 51743 / NCIMB 8052) (Clostridium acetobutylicum), this protein is DNA replication and repair protein RecF.